Reading from the N-terminus, the 382-residue chain is Na(+)/H(+) antiporter NhaA (382 aa).

11 helical membrane-spanning segments follow: residues 14-34 (AGGI…NSSF), 49-69 (MSVS…LIGL), 87-107 (IFPA…YVAF), 117-137 (GWAI…ALLG), 146-166 (VFLL…IAFF), 171-191 (LSVL…LLNS), 205-225 (FILW…GVVL), 247-267 (ALHP…NAGI), 285-305 (VALG…YVAV), 321-341 (IFAV…ISSL), and 356-376 (LGIL…LHIS).

It belongs to the NhaA Na(+)/H(+) (TC 2.A.33) antiporter family.

It localises to the cell inner membrane. The catalysed reaction is Na(+)(in) + 2 H(+)(out) = Na(+)(out) + 2 H(+)(in). In terms of biological role, na(+)/H(+) antiporter that extrudes sodium in exchange for external protons. This chain is Na(+)/H(+) antiporter NhaA, found in Aliivibrio salmonicida (strain LFI1238) (Vibrio salmonicida (strain LFI1238)).